A 67-amino-acid polypeptide reads, in one-letter code: Conotoxin TxMMSK-01 (67 aa).

The first 20 residues, 1–20 (MMSKLGVLLITCLLLFPLTA), serve as a signal peptide directing secretion. Positions 21–53 (VPLDGDQPADQPAERLQDDISSENHPFFDPVKR) are excised as a propeptide. 3 cysteine pairs are disulfide-bonded: Cys54-Cys66, Cys55-Cys62, and Cys59-Cys65. Pro64 is modified (4-hydroxyproline). Cys66 carries the post-translational modification Cysteine amide.

Belongs to the conotoxin M superfamily. In terms of tissue distribution, expressed by the venom duct.

The protein resides in the secreted. This is Conotoxin TxMMSK-01 from Conus textile (Cloth-of-gold cone).